Reading from the N-terminus, the 114-residue chain is MGSRPCDLGLFCCCSSCFCLCCPRHRPVSRLAAVVGGAAAVPAVVSGVTGLILSPSQSPIFIQPTPSPPMSPLRPGLDLVFANQPDHSAPLGVTRPSAPPLPHVVDLPQLGPRR.

2 hydrophobic regions span residues 6–22 (CDLG…CLCC) and 33–53 (AVVG…GLIL). The tract at residues 28–68 (VSRLAAVVGGAAAVPAVVSGVTGLILSPSQSPIFIQPTPSP) is interaction with host HPX. The segment at 48 to 72 (VTGLILSPSQSPIFIQPTPSPPMSP) is interaction with the capsid protein. S71 is subject to Phosphoserine; by host. A homodimerization, and interaction with host AMBP/bikunin region spans residues 72–114 (PLRPGLDLVFANQPDHSAPLGVTRPSAPPLPHVVDLPQLGPRR). Positions 91 to 114 (LGVTRPSAPPLPHVVDLPQLGPRR) are disordered. The tract at residues 95–104 (RPSAPPLPHV) is interaction with host SRC, HCK, FYN, PIK3R3 and GRB2. Residues 96–99 (PSAP) carry the PTAP/PSAP motif motif.

Belongs to the hepevirus ORF3 protein family. Forms homooligomers. Interacts with host SRC, HCK, FYN, PIK3R3 and GRB2 (via SH3 domain); binding does not activate the kinases. Interacts with host AMBP/bikunin and AMBP/alpha-1-microglobulin peptides. Interacts with host HPX/hemopexin. Interacts (when phosphorylated) with capsid protein ORF2. Interacts with host TSG101; this interaction plays a role in viral release from the host cell. Interacts with host SIRPA; this interaction down-regulates the phosphorylation of host IRF3. Post-translationally, palmitoylated in the N-terminus.

Its subcellular location is the host endoplasmic reticulum membrane. The protein resides in the host cytoplasm. It is found in the host cytoskeleton. It localises to the virion. The protein localises to the host cell membrane. In terms of biological role, small multifunctional phosphoprotein involved in virion morphogenesis, egress and counteracting host innate immunity. Plays critical roles in the final steps of viral release by interacting with host TSG101, a member of the vacuolar protein-sorting pathway and using other cellular host proteins involved in vesicle formation pathway. Also acts as a viroporin and forms ion conductive pores allowing viral particle release. Impairs the generation of type I interferon by down-regulating host TLR3 and TLR7 as well as their downstream signaling pathways. Down-regulates the phosphorylation of host IRF3 via the interaction with host SIRP-alpha, thereby inhibiting IFN-I expression. Interacts with host microtubules. In Homo sapiens (Human), this protein is Protein ORF3.